We begin with the raw amino-acid sequence, 125 residues long: MAGPSLACCLLGLLALTSACYIQNCPLGGKRAVLDLDVRKCLPCGPGGKGRCFGPSICCGDELGCFVGTAEALRCQEENYLPSPCQSGQKPCGSEGRCAAAGICCNPDGCRFDPACDPEATFSQR.

A signal peptide spans 1–19 (MAGPSLACCLLGLLALTSA). Cys-20 and Cys-25 are oxidised to a cystine. The residue at position 28 (Gly-28) is a Glycine amide. 7 disulfides stabilise this stretch: Cys-41/Cys-85, Cys-44/Cys-58, Cys-52/Cys-75, Cys-59/Cys-65, Cys-92/Cys-104, Cys-98/Cys-116, and Cys-105/Cys-110.

The protein belongs to the vasopressin/oxytocin family. As to quaternary structure, interacts with oxytocin receptor (Ki=1.5 nM). Interacts with vasopressin V1aR/AVPR1A (Ki=37 nM), V1bR/AVPR1B (Ki=222 nM), and V2R/AVPR2 receptors (Ki=823 nM).

Its function is as follows. Neurophysin 1 specifically binds oxytocin. Oxytocin causes contraction of the smooth muscle of the uterus and of the mammary gland. Acts by binding to oxytocin receptor (OXTR). The protein is Oxytocin-neurophysin 1 (OXT) of Sus scrofa (Pig).